Reading from the N-terminus, the 276-residue chain is MNTFRTTALMAVMIVLFALIGQALGGTGGMLLAFLIAVGMNGVSYWYSSSIVLRMYGAEEVSRAEAPELHDLVDRLRRRADLPMPKVCIIPQDQPNAFATGRNPDNAVVAVTKGIMDVLDRDELAGVIAHELAHIKNRDMLTSTVAATLAGAITMLSRFALFFGGRDNNFLVSLLMMILAPMAAMLIQSAISRSREYAADREGAEIAKNPLGLASALRSMERAAEHRPMPANQTTSHMFIVNPFSGGLSGIKRLFSTHPPTEERIARLEEMAGRAQ.

A helical membrane pass occupies residues 14-34 (IVLFALIGQALGGTGGMLLAF). His-130 lines the Zn(2+) pocket. Residue Glu-131 is part of the active site. Residue His-134 coordinates Zn(2+). The next 2 helical transmembrane spans lie at 145–165 (VAAT…FFGG) and 171–191 (LVSL…QSAI). Glu-196 provides a ligand contact to Zn(2+).

This sequence belongs to the peptidase M48B family. Zn(2+) serves as cofactor.

Its subcellular location is the cell inner membrane. The chain is Protease HtpX homolog from Salinibacter ruber (strain DSM 13855 / M31).